Consider the following 218-residue polypeptide: CTD kinase subunit gamma (218 aa).

In terms of domain architecture, CID spans 2–138 (DPFEGRMTFL…DAMATVEAHE (137 aa)). The disordered stretch occupies residues 137-157 (HEQASKSGDTSTSGAISKNDI). Residues 141 to 152 (SKSGDTSTSGAI) are compositionally biased toward polar residues.

It belongs to the CTK3 family. As to quaternary structure, CTDK-I consists of three subunits, ctk1/lsk1, ctk2/lsc1 and ctk3 (also called alpha, beta and gamma).

It localises to the cytoplasm. Its subcellular location is the nucleus. Functionally, subunit of the CTDK-I complex, which hyperphosphorylates the C-terminal heptapeptide repeat domain (CTD) of the largest RNA polymerase II subunit. As part of the CTDK-I complex, involved in RNA polymerase II transcriptional elongation and pre-mRNA 3'-end processing. Together with ctk2, required for ctk1/lsk1 CTD kinase activation. This is CTD kinase subunit gamma from Schizosaccharomyces pombe (strain 972 / ATCC 24843) (Fission yeast).